A 123-amino-acid polypeptide reads, in one-letter code: CD59A glycoprotein (123 aa).

Residues 1-23 (MRAQRGLILLLLLLAVFCSTAVS) form the signal peptide. In terms of domain architecture, UPAR/Ly6 spans 24–96 (LTCYHCFQPV…CCQFNLCNKS (73 aa)). 5 disulfides stabilise this stretch: Cys-26–Cys-50, Cys-29–Cys-37, Cys-43–Cys-63, Cys-69–Cys-87, and Cys-88–Cys-93. Residue Asn-40 is glycosylated (N-linked (GlcNAc...) asparagine). Asn-94 is a glycosylation site (N-linked (GlcNAc...) asparagine). Residues 97–123 (DGSLGKTPLLGTSVLVAILNLCFLSHL) constitute a propeptide, removed in mature form.

As to quaternary structure, interacts with T-cell surface antigen CD2. N- and O-glycosylated. In terms of tissue distribution, expressed in all tissues examined (liver, kidney, spleen, thymus, brain and heart). Low levels in thymus. Also expressed in mononuclear cells, erythrocytes and platelets. Barely detected in neutrophils.

It localises to the cell membrane. Its subcellular location is the secreted. Potent inhibitor of the complement membrane attack complex (MAC) action, which protects self-cells from damage during complement activation. Acts by binding to the beta-haipins of C8 (C8A and C8B) components of the assembling MAC, forming an intermolecular beta-sheet that prevents incorporation of the multiple copies of C9 required for complete formation of the osmolytic pore. In Mus musculus (Mouse), this protein is CD59A glycoprotein.